The chain runs to 326 residues: 4-hydroxythreonine-4-phosphate dehydrogenase (326 aa).

Substrate is bound by residues histidine 133 and threonine 134. 3 residues coordinate a divalent metal cation: histidine 163, histidine 208, and histidine 263. Positions 271, 280, and 289 each coordinate substrate.

The protein belongs to the PdxA family. As to quaternary structure, homodimer. The cofactor is Zn(2+). Mg(2+) serves as cofactor. Requires Co(2+) as cofactor.

It localises to the cytoplasm. It carries out the reaction 4-(phosphooxy)-L-threonine + NAD(+) = 3-amino-2-oxopropyl phosphate + CO2 + NADH. Its pathway is cofactor biosynthesis; pyridoxine 5'-phosphate biosynthesis; pyridoxine 5'-phosphate from D-erythrose 4-phosphate: step 4/5. Functionally, catalyzes the NAD(P)-dependent oxidation of 4-(phosphooxy)-L-threonine (HTP) into 2-amino-3-oxo-4-(phosphooxy)butyric acid which spontaneously decarboxylates to form 3-amino-2-oxopropyl phosphate (AHAP). This Pseudoalteromonas atlantica (strain T6c / ATCC BAA-1087) protein is 4-hydroxythreonine-4-phosphate dehydrogenase.